Reading from the N-terminus, the 454-residue chain is Tubulin gamma chain (454 aa).

142–148 (AGGTGSG) serves as a coordination point for GTP.

Belongs to the tubulin family.

The protein localises to the cytoplasm. Its subcellular location is the cytoskeleton. It is found in the microtubule organizing center. It localises to the spindle pole body. Functionally, tubulin is the major constituent of microtubules. The gamma chain is found at microtubule organizing centers (MTOC) such as the spindle pole or the centrosome, suggesting that it is involved in the minus-end nucleation of microtubule assembly. Interacts physically with beta-tubulin and is involved in microtubule function. In Emericella nidulans (strain FGSC A4 / ATCC 38163 / CBS 112.46 / NRRL 194 / M139) (Aspergillus nidulans), this protein is Tubulin gamma chain (mipA).